The chain runs to 294 residues: Type I ribosome-inactivating protein trichoanguina (294 aa).

Positions 1–19 (MALSFFFLAISLGSPTAIG) are cleaved as a signal peptide. Asn-70 is a glycosylation site (N-linked (GlcNAc...) asparagine). Catalysis depends on residues Glu-177 and Arg-180. Residue Asn-220 is glycosylated (N-linked (GlcNAc...) asparagine). Positions 265-294 (VGSEYDIPTTILHPGAMGMLHNQNGNYVTM) are excised as a propeptide.

Belongs to the ribosome-inactivating protein family. Type 1 RIP subfamily.

The catalysed reaction is Endohydrolysis of the N-glycosidic bond at one specific adenosine on the 28S rRNA.. Functionally, inhibits protein synthesis by depurinating 28S rRNA in ribosomes. The polypeptide is Type I ribosome-inactivating protein trichoanguina (TCA) (Trichosanthes anguina (Snake gourd)).